A 356-amino-acid chain; its full sequence is Ferredoxin--NADP reductase (356 aa).

8 residues coordinate FAD: Thr-25, Glu-44, Gln-52, Tyr-57, Val-97, Phe-132, Asp-298, and Ser-339.

The protein belongs to the ferredoxin--NADP reductase type 2 family. Homodimer. Requires FAD as cofactor.

The enzyme catalyses 2 reduced [2Fe-2S]-[ferredoxin] + NADP(+) + H(+) = 2 oxidized [2Fe-2S]-[ferredoxin] + NADPH. This Chlorobaculum parvum (strain DSM 263 / NCIMB 8327) (Chlorobium vibrioforme subsp. thiosulfatophilum) protein is Ferredoxin--NADP reductase.